The following is a 292-amino-acid chain: 4-hydroxy-tetrahydrodipicolinate synthase (292 aa).

Residue threonine 45 coordinates pyruvate. Tyrosine 133 acts as the Proton donor/acceptor in catalysis. The Schiff-base intermediate with substrate role is filled by lysine 161. A pyruvate-binding site is contributed by isoleucine 203.

This sequence belongs to the DapA family. In terms of assembly, homotetramer; dimer of dimers.

Its subcellular location is the cytoplasm. The enzyme catalyses L-aspartate 4-semialdehyde + pyruvate = (2S,4S)-4-hydroxy-2,3,4,5-tetrahydrodipicolinate + H2O + H(+). It functions in the pathway amino-acid biosynthesis; L-lysine biosynthesis via DAP pathway; (S)-tetrahydrodipicolinate from L-aspartate: step 3/4. Catalyzes the condensation of (S)-aspartate-beta-semialdehyde [(S)-ASA] and pyruvate to 4-hydroxy-tetrahydrodipicolinate (HTPA). This Cronobacter sakazakii (strain ATCC BAA-894) (Enterobacter sakazakii) protein is 4-hydroxy-tetrahydrodipicolinate synthase.